Consider the following 397-residue polypeptide: Acetate kinase (397 aa).

Mg(2+) is bound at residue N7. K14 is a binding site for ATP. Residue R90 participates in substrate binding. D147 serves as the catalytic Proton donor/acceptor. Residues 207-211 (HLGNG), 282-284 (DFR), and 330-334 (GLGEN) each bind ATP. Mg(2+) is bound at residue E383.

Belongs to the acetokinase family. As to quaternary structure, homodimer. It depends on Mg(2+) as a cofactor. Requires Mn(2+) as cofactor.

It localises to the cytoplasm. It carries out the reaction acetate + ATP = acetyl phosphate + ADP. It functions in the pathway metabolic intermediate biosynthesis; acetyl-CoA biosynthesis; acetyl-CoA from acetate: step 1/2. Its function is as follows. Catalyzes the formation of acetyl phosphate from acetate and ATP. Can also catalyze the reverse reaction. The sequence is that of Acetate kinase from Clostridium botulinum (strain Okra / Type B1).